The following is a 155-amino-acid chain: uncharacterized protein (155 aa).

A run of 4 helical transmembrane segments spans residues 25 to 45 (LPMGFIGITLFEIGILLFGWT), 50 to 70 (IFWFVPTIGSAIMGGGYIMTS), 91 to 111 (GVKIFQLLLGAIFPLFAESLF), and 118 to 138 (WGCTLLAFILLACGCSLPILF).

The protein belongs to the major facilitator superfamily. CAR1 family.

The protein resides in the membrane. This is an uncharacterized protein from Schizosaccharomyces pombe (strain 972 / ATCC 24843) (Fission yeast).